We begin with the raw amino-acid sequence, 300 residues long: E3 ubiquitin-protein ligase RNF212B (300 aa).

The RING-type zinc-finger motif lies at 6 to 40 (CNQCFRKDGAHFFVTSCGHIFCKKCVTLEKCAVCG). Residues 88-124 (LIAFYKHRITKLETAMQETQQALVSQDKELSVLRKEN) are a coiled coil. 2 disordered regions span residues 141-251 (YQGS…HTRV) and 280-300 (PYQQ…TTSR). The segment covering 155–169 (TSPSQSVTPRPSFQH) has biased composition (polar residues). The span at 170-183 (SSQVVSRSSSVESV) shows a compositional bias: low complexity. Residues 191–200 (GSLGQGGRGL) show a composition bias toward gly residues. Residues 211–234 (NETPSPASTHSLSYRPSSASSGQG) show a composition bias toward polar residues.

Homodimer. Autoubiquitinated.

It is found in the chromosome. It carries out the reaction S-ubiquitinyl-[E2 ubiquitin-conjugating enzyme]-L-cysteine + [acceptor protein]-L-lysine = [E2 ubiquitin-conjugating enzyme]-L-cysteine + N(6)-ubiquitinyl-[acceptor protein]-L-lysine.. It functions in the pathway protein modification; protein ubiquitination. Functionally, ubiquitin E3 ligase that acts as a crucial factor for crossing-over (CO) formation during meiosis. Essential for normal prophase I progression and for ensuring appropriate CO designation in meiosis. Recruits key components of the cross-over machinery either directly ou indirectly, leading to the activation of the MutL-gamma complex. The function of RNF212B in CO designation is dependent on its catalytic activity. This chain is E3 ubiquitin-protein ligase RNF212B (RNF212B), found in Pongo abelii (Sumatran orangutan).